The chain runs to 30 residues: MRSYEMNIETAEELSAVNDILASIGEPPVS.

This Escherichia coli (Bacteriophage T3) protein is Tail tubular protein A (11).